The sequence spans 217 residues: Redox-sensing transcriptional repressor Rex (217 aa).

Positions 18–57 form a DNA-binding region, H-T-H motif; the sequence is LYYRFLKNLHASGKQRVSSAELSDAVKVDSATIRRDFSYF. An NAD(+)-binding site is contributed by 92 to 97; sequence GVGNLG.

It belongs to the transcriptional regulatory Rex family. In terms of assembly, homodimer.

The protein resides in the cytoplasm. Modulates transcription in response to changes in cellular NADH/NAD(+) redox state. This is Redox-sensing transcriptional repressor Rex from Bacillus pumilus (strain SAFR-032).